The sequence spans 269 residues: Tryptophan synthase alpha chain (269 aa).

Active-site proton acceptor residues include glutamate 49 and aspartate 60.

Belongs to the TrpA family. As to quaternary structure, tetramer of two alpha and two beta chains.

The catalysed reaction is (1S,2R)-1-C-(indol-3-yl)glycerol 3-phosphate + L-serine = D-glyceraldehyde 3-phosphate + L-tryptophan + H2O. Its pathway is amino-acid biosynthesis; L-tryptophan biosynthesis; L-tryptophan from chorismate: step 5/5. Its function is as follows. The alpha subunit is responsible for the aldol cleavage of indoleglycerol phosphate to indole and glyceraldehyde 3-phosphate. This is Tryptophan synthase alpha chain from Pseudomonas fluorescens (strain SBW25).